Consider the following 136-residue polypeptide: Large ribosomal subunit protein uL22 (136 aa).

Belongs to the universal ribosomal protein uL22 family. Part of the 50S ribosomal subunit.

In terms of biological role, this protein binds specifically to 23S rRNA; its binding is stimulated by other ribosomal proteins, e.g. L4, L17, and L20. It is important during the early stages of 50S assembly. It makes multiple contacts with different domains of the 23S rRNA in the assembled 50S subunit and ribosome. Its function is as follows. The globular domain of the protein is located near the polypeptide exit tunnel on the outside of the subunit, while an extended beta-hairpin is found that lines the wall of the exit tunnel in the center of the 70S ribosome. The polypeptide is Large ribosomal subunit protein uL22 (Bacteroides fragilis (strain ATCC 25285 / DSM 2151 / CCUG 4856 / JCM 11019 / LMG 10263 / NCTC 9343 / Onslow / VPI 2553 / EN-2)).